The sequence spans 164 residues: Ubiquitin-fold modifier-conjugating enzyme 1 (164 aa).

Cysteine 116 functions as the Glycyl thioester intermediate in the catalytic mechanism.

Belongs to the ubiquitin-conjugating enzyme family. UFC1 subfamily.

Functionally, E2-like enzyme which forms an intermediate with UFM1 via a thioester linkage. This Drosophila ananassae (Fruit fly) protein is Ubiquitin-fold modifier-conjugating enzyme 1.